The chain runs to 512 residues: Phospho-2-dehydro-3-deoxyheptonate aldolase 2, chloroplastic (512 aa).

Residues 1–57 (MALTATATTRGGSALPNSCLQTPKFQSLQKPTFISSFPTNKKTKPRTKHISAVQSPP) constitute a chloroplast transit peptide. Residues 37-57 (FPTNKKTKPRTKHISAVQSPP) form a disordered region. Cys126 is a Mn(2+) binding site. Substrate is bound by residues Arg165, 324-325 (ER), Lys347, and Arg378. Mn(2+) contacts are provided by His410, Glu452, and Asp482.

The protein belongs to the class-II DAHP synthase family. In terms of assembly, homodimer. Mn(2+) is required as a cofactor. Mostly expressed in leaves and stems, and, to a lower extent, in roots, stigmas, anthers, petal tubes, petal limbs and sepals.

The protein resides in the plastid. The protein localises to the chloroplast. It catalyses the reaction D-erythrose 4-phosphate + phosphoenolpyruvate + H2O = 7-phospho-2-dehydro-3-deoxy-D-arabino-heptonate + phosphate. The protein operates within metabolic intermediate biosynthesis; chorismate biosynthesis; chorismate from D-erythrose 4-phosphate and phosphoenolpyruvate: step 1/7. In terms of biological role, involved in the production of volatile organic compounds (VOCs). Catalyzes an aldol-like condensation reaction between phosphoenolpyruvate (PEP) and D-erythrose 4-phosphate (E4P) to generate 3-deoxy-D-arabino-heptulosonate 7-phosphate (DAH7P) and inorganic phosphate. In Petunia hybrida (Petunia), this protein is Phospho-2-dehydro-3-deoxyheptonate aldolase 2, chloroplastic.